A 58-amino-acid chain; its full sequence is Potassium channel toxin Ts16 (58 aa).

The signal sequence occupies residues 1–16 (MHSSVFILILFSLAVI). Cystine bridges form between C29–C51, C34–C47, and C38–C53.

As to expression, expressed by the venom gland.

The protein localises to the secreted. Blocks potassium channels. The chain is Potassium channel toxin Ts16 from Tityus serrulatus (Brazilian scorpion).